The sequence spans 1068 residues: Target of Nesh-SH3 (1068 aa).

An N-terminal signal peptide occupies residues 1–21 (MLSSLGCLLLCGSITLALGNA). N37 carries N-linked (GlcNAc...) asparagine glycosylation. The 99-residue stretch at 116 to 214 (KPLQLVVGTL…KIFNHKTVVG (99 aa)) folds into the Fibronectin type-III 1 domain. Disordered stretches follow at residues 315 to 351 (SKTP…DVSE) and 384 to 811 (VFSS…SITD). Over residues 326–339 (RPTTVTPETVPRST) the composition is skewed to low complexity. The segment covering 340–351 (KPTTSSALDVSE) has biased composition (polar residues). Over residues 447-462 (QPTTPAPQQTTSIPST) the composition is skewed to low complexity. Residues 463-473 (PKRRPRPKPPR) show a composition bias toward basic residues. Residues 482-499 (AGTITPKISKSPEPTWTT) are compositionally biased toward polar residues. Over residues 532-544 (RAPPKPKTSPRPR) the composition is skewed to pro residues. Residues 562–574 (PKTSPSPEVSYTT) are compositionally biased toward polar residues. Composition is skewed to low complexity over residues 603 to 631 (IPFI…STQE) and 737 to 750 (PPLR…GTPL). Positions 802-811 (PDNSPCSITD) are enriched in polar residues. The Fibronectin type-III 2 domain maps to 833-926 (PPTNLTVVTV…NTVAFSTESA (94 aa)).

As to quaternary structure, probably interacts with ABI3. Expressed in brain, heart, lung, liver, pancreas kidney and placenta.

It localises to the secreted. This chain is Target of Nesh-SH3, found in Homo sapiens (Human).